We begin with the raw amino-acid sequence, 89 residues long: Small ribosomal subunit protein uS15 (89 aa).

This sequence belongs to the universal ribosomal protein uS15 family. In terms of assembly, part of the 30S ribosomal subunit. Forms a bridge to the 50S subunit in the 70S ribosome, contacting the 23S rRNA.

Its function is as follows. One of the primary rRNA binding proteins, it binds directly to 16S rRNA where it helps nucleate assembly of the platform of the 30S subunit by binding and bridging several RNA helices of the 16S rRNA. In terms of biological role, forms an intersubunit bridge (bridge B4) with the 23S rRNA of the 50S subunit in the ribosome. The chain is Small ribosomal subunit protein uS15 from Cupriavidus metallidurans (strain ATCC 43123 / DSM 2839 / NBRC 102507 / CH34) (Ralstonia metallidurans).